A 219-amino-acid chain; its full sequence is Large ribosomal subunit protein eL13 (219 aa).

The interval 198-219 is disordered; sequence KDAAENPDDVTKAPTAVKRNKT.

This sequence belongs to the eukaryotic ribosomal protein eL13 family. Component of the 60S large ribosomal subunit (LSU).

It localises to the cytoplasm. Functionally, component of the ribosome, a large ribonucleoprotein complex responsible for the synthesis of proteins in the cell. The small ribosomal subunit (SSU) binds messenger RNAs (mRNAs) and translates the encoded message by selecting cognate aminoacyl-transfer RNA (tRNA) molecules. The large subunit (LSU) contains the ribosomal catalytic site termed the peptidyl transferase center (PTC), which catalyzes the formation of peptide bonds, thereby polymerizing the amino acids delivered by tRNAs into a polypeptide chain. The nascent polypeptides leave the ribosome through a tunnel in the LSU and interact with protein factors that function in enzymatic processing, targeting, and the membrane insertion of nascent chains at the exit of the ribosomal tunnel. As part of the LSU, it is probably required for its formation and the maturation of rRNAs. This Spodoptera frugiperda (Fall armyworm) protein is Large ribosomal subunit protein eL13 (RpL13).